The following is an 878-amino-acid chain: DNA gyrase subunit A (878 aa).

Residues 34–533 (LPDVRDGLKP…NSADINIEDL (500 aa)) enclose the Topo IIA-type catalytic domain. Residue Tyr122 is the O-(5'-phospho-DNA)-tyrosine intermediate of the active site. A GyrA-box motif is present at residues 560 to 566 (QRRGGKG). The segment at 844 to 878 (DDEELDAIDGSVAEGDEDIAPEAESDDDVADDADE) is disordered. Positions 857-878 (EGDEDIAPEAESDDDVADDADE) are enriched in acidic residues.

Belongs to the type II topoisomerase GyrA/ParC subunit family. Heterotetramer, composed of two GyrA and two GyrB chains. In the heterotetramer, GyrA contains the active site tyrosine that forms a transient covalent intermediate with DNA, while GyrB binds cofactors and catalyzes ATP hydrolysis.

The protein localises to the cytoplasm. The catalysed reaction is ATP-dependent breakage, passage and rejoining of double-stranded DNA.. A type II topoisomerase that negatively supercoils closed circular double-stranded (ds) DNA in an ATP-dependent manner to modulate DNA topology and maintain chromosomes in an underwound state, and also catalyzes the interconversion of other topological isomers of double-stranded DNA rings, including catenanes and knotted rings. Replenishes negative supercoiling downstream of highly transcribed genes to help control overall chromosomal supercoiling density. E.coli makes 15% more negative supercoils in pBR322 plasmid DNA than S.typhimurium; the S.typhimurium GyrB subunit is toxic in E.coli, while the E.coli copy can be expressed in S.typhimurium even though the 2 subunits have 777/804 residues identical. Functionally, negative supercoiling favors strand separation, and DNA replication, transcription, recombination and repair, all of which involve strand separation. Type II topoisomerases break and join 2 DNA strands simultaneously in an ATP-dependent manner. This chain is DNA gyrase subunit A, found in Salmonella typhimurium (strain LT2 / SGSC1412 / ATCC 700720).